The following is a 1325-amino-acid chain: ATP-binding cassette sub-family C member 4 (1325 aa).

The region spanning 92–377 is the ABC transmembrane type-1 1 domain; that stretch reads YLVLGIFTLI…FFPSAIERVS (286 aa). Transmembrane regions (helical) follow at residues 93–113, 136–156, 207–227, 228–248, 328–348, 351–371, and 440–460; these read LVLG…PIFL, AYAT…HLYF, QVTV…AVTA, LLWM…IILL, SKII…VITA, VFVA…FFPS, and LLAV…AVLG. In terms of domain architecture, ABC transporter 1 spans 410-633; sequence VHVQDFTAFW…GIDFGSLLKK (224 aa). An ATP-binding site is contributed by 445–452; that stretch reads GPVGAGKS. Phosphothreonine occurs at positions 646 and 648. The segment covering 657–667 has biased composition (low complexity); that stretch reads SSVWSQQSSRP. The disordered stretch occupies residues 657–688; the sequence is SSVWSQQSSRPSLKDGALESQDTENVPVTLSE. Serine 664 and serine 668 each carry phosphoserine. A helical transmembrane segment spans residues 710–730; that stretch reads HWIVFIFLILLNTAAQVAYVL. In terms of domain architecture, ABC transmembrane type-1 2 spans 714–1005; sequence FIFLILLNTA…CVRQSAEVEN (292 aa). N-linked (GlcNAc...) asparagine glycans are attached at residues asparagine 746 and asparagine 754. 6 helical membrane-spanning segments follow: residues 771 to 791, 836 to 856, 858 to 878, 954 to 974, 977 to 997, and 1038 to 1058; these read LTVA…YVLV, LPLT…VVSV, VAVI…FIFL, AICA…AKTL, GQVG…QWCV, and EGVI…PLVL. One can recognise an ABC transporter 2 domain in the interval 1041 to 1274; sequence IIFDNVNFMY…KESLFYKMVQ (234 aa). An ATP-binding site is contributed by 1075 to 1082; the sequence is GRTGAGKS. Residues 1322–1325 carry the PDZ-binding motif; it reads ETAL.

Belongs to the ABC transporter superfamily. ABCC family. Conjugate transporter (TC 3.A.1.208) subfamily. Interacts (via PDZ-binding motif) with SNX27 (via PDZ domain); this interaction accelerates MRP4 internalization. The cofactor is Mg(2+). Post-translationally, N-glycosylated; leading to substrate-selective effects on its transport activity. In terms of tissue distribution, widely expressed, with particularly high levels in prostate, but is barely detectable in liver. sinusoidal membrane of hepatocytes.

It is found in the basolateral cell membrane. Its subcellular location is the apical cell membrane. It carries out the reaction ATP + H2O + xenobioticSide 1 = ADP + phosphate + xenobioticSide 2.. The enzyme catalyses an S-substituted glutathione(in) + ATP + H2O = an S-substituted glutathione(out) + ADP + phosphate + H(+). The catalysed reaction is 17beta-estradiol 17-O-(beta-D-glucuronate)(in) + ATP + H2O = 17beta-estradiol 17-O-(beta-D-glucuronate)(out) + ADP + phosphate + H(+). It catalyses the reaction dehydroepiandrosterone 3-sulfate(in) + ATP + H2O = dehydroepiandrosterone 3-sulfate(out) + ADP + phosphate + H(+). It carries out the reaction leukotriene C4(in) + ATP + H2O = leukotriene C4(out) + ADP + phosphate + H(+). The enzyme catalyses leukotriene B4(in) + ATP + H2O = leukotriene B4(out) + ADP + phosphate + H(+). The catalysed reaction is urate(in) + ATP + H2O = urate(out) + ADP + phosphate + H(+). It catalyses the reaction 3',5'-cyclic GMP(in) + ATP + H2O = 3',5'-cyclic GMP(out) + ADP + phosphate + H(+). It carries out the reaction 3',5'-cyclic AMP(in) + ATP + H2O = 3',5'-cyclic AMP(out) + ADP + phosphate + H(+). The enzyme catalyses prostaglandin E2(in) + ATP + H2O = prostaglandin E2(out) + ADP + phosphate + H(+). The catalysed reaction is prostaglandin E1(in) + ATP + H2O = prostaglandin E1(out) + ADP + phosphate + H(+). It catalyses the reaction glycodeoxycholate(in) + glutathione(in) + ATP + H2O = glycodeoxycholate(out) + glutathione(out) + ADP + phosphate + H(+). It carries out the reaction cholate(in) + glutathione(in) + ATP + H2O = cholate(out) + glutathione(out) + ADP + phosphate + H(+). The enzyme catalyses glycocholate(in) + glutathione(in) + ATP + H2O = glycocholate(out) + glutathione(out) + ADP + phosphate + H(+). The catalysed reaction is taurocholate(in) + glutathione(in) + ATP + H2O = taurocholate(out) + glutathione(out) + ADP + phosphate + H(+). It catalyses the reaction glycochenodeoxycholate(in) + glutathione(in) + ATP + H2O = glycochenodeoxycholate(out) + glutathione(out) + ADP + phosphate + H(+). It carries out the reaction taurochenodeoxycholate(in) + glutathione(in) + ATP + H2O = taurochenodeoxycholate(out) + glutathione(out) + ADP + phosphate + H(+). The enzyme catalyses glycoursodeoxycholate(in) + glutathione(in) + ATP + H2O = glycoursodeoxycholate(out) + glutathione(out) + ADP + phosphate + H(+). The catalysed reaction is tauroursodeoxycholate(in) + glutathione(in) + ATP + H2O = tauroursodeoxycholate(out) + glutathione(out) + ADP + phosphate + H(+). With respect to regulation, GSH stimulates the transport of MRP4. Urate inhibits methotrexate transport but stimulates cGMP transport. Nonsteroidal anti-inflammatory drugs (NSAIDs) strongly suppress the transport of MRP4 substrates. ATP-dependent transporter of the ATP-binding cassette (ABC) family that actively extrudes physiological compounds and xenobiotics from cells. Transports a range of endogenous molecules that have a key role in cellular communication and signaling, including cyclic nucleotides such as cyclic AMP (cAMP) and cyclic GMP (cGMP), bile acids, steroid conjugates, urate, and prostaglandins. Mediates the ATP-dependent efflux of glutathione conjugates such as leukotriene C4 (LTC4) and leukotriene B4 (LTB4) too. The presence of GSH is necessary for the ATP-dependent transport of LTB4, whereas GSH is not required for the transport of LTC4. Mediates the cotransport of bile acids with reduced glutathione (GSH). Transports a wide range of drugs and their metabolites, including anticancer, antiviral and antibiotics molecules. Confers resistance to anticancer agents such as methotrexate. This chain is ATP-binding cassette sub-family C member 4 (ABCC4), found in Homo sapiens (Human).